The following is a 381-amino-acid chain: Putative glycosyltransferase EpsD (381 aa).

Belongs to the glycosyltransferase group 1 family. Glycosyltransferase 4 subfamily.

Functionally, may be involved in the production of the exopolysaccharide (EPS) component of the extracellular matrix during biofilm formation. EPS is responsible for the adhesion of chains of cells into bundles. Required for biofilm maintenance. The polypeptide is Putative glycosyltransferase EpsD (epsD) (Bacillus subtilis (strain 168)).